Reading from the N-terminus, the 270-residue chain is Oxidized low-density lipoprotein receptor 1 (270 aa).

A compositionally biased stretch (basic and acidic residues) spans 1 to 14 (MTVDDPKGMKDQLD). The interval 1 to 22 (MTVDDPKGMKDQLDQKPNGKTA) is disordered. Topologically, residues 1–33 (MTVDDPKGMKDQLDQKPNGKTAKGFVSSWRWYP) are cytoplasmic. A helical; Signal-anchor for type II membrane protein membrane pass occupies residues 34–56 (AAVTLGVLCLGLLVTVILLILQL). Cys42 carries S-palmitoyl cysteine lipidation. The neck stretch occupies residues 57-146 (SQVSDLIKKQ…SGPCPQDWLW (90 aa)). Over 57–270 (SQVSDLIKKQ…QKKANLLRAQ (214 aa)) the chain is Extracellular. N-linked (GlcNAc...) asparagine glycans are attached at residues Asn69 and Asn135. The stretch at 85 to 135 (RRSEKSAQESQKELKEMIETLAHKLDEKSKKLMELHRQNLNLQEVLKEAAN) forms a coiled coil. Cystine bridges form between Cys140-Cys151, Cys168-Cys260, and Cys239-Cys252. A C-type lectin domain is found at 147-261 (HEENCYQFSS…CILTAFSICQ (115 aa)).

In terms of assembly, homodimer; disulfide-linked. May form a hexamer composed of 3 homodimers. Interacts with HSP70. Post-translationally, N-glycosylated. In terms of tissue distribution, highly expressed in endothelial cells, aortic intima and lung. Expressed at low level in other tissues.

Its subcellular location is the cell membrane. The protein resides in the membrane raft. It localises to the secreted. Receptor that mediates the recognition, internalization and degradation of oxidatively modified low density lipoprotein (oxLDL) by vascular endothelial cells. OxLDL is a marker of atherosclerosis that induces vascular endothelial cell activation and dysfunction, resulting in pro-inflammatory responses, pro-oxidative conditions and apoptosis. Its association with oxLDL induces the activation of NF-kappa-B through an increased production of intracellular reactive oxygen and a variety of pro-atherogenic cellular responses including a reduction of nitric oxide (NO) release, monocyte adhesion and apoptosis. In addition to binding oxLDL, it acts as a receptor for the HSP70 protein involved in antigen cross-presentation to naive T-cells in dendritic cells, thereby participating in cell-mediated antigen cross-presentation. Also involved in inflammatory process, by acting as a leukocyte-adhesion molecule at the vascular interface in endotoxin-induced inflammation. Also acts as a receptor for advanced glycation end (AGE) products, activated platelets, monocytes, apoptotic cells and both Gram-negative and Gram-positive bacteria. This chain is Oxidized low-density lipoprotein receptor 1 (OLR1), found in Bos taurus (Bovine).